Here is a 425-residue protein sequence, read N- to C-terminus: Decarboxylase flvG (425 aa).

Lys82 is subject to N6-(pyridoxal phosphate)lysine. Pyridoxal 5'-phosphate-binding positions include Ser213, Gly250, and 281–284; that span reads EPGR. Position 331–332 (331–332) interacts with substrate; the sequence is FE. The active-site Proton donor; shared with dimeric partner is Cys365. Asp366 provides a ligand contact to substrate. Residue Tyr395 participates in pyridoxal 5'-phosphate binding.

Belongs to the Orn/Lys/Arg decarboxylase class-II family. Homodimer. Only the dimer is catalytically active, as the active sites are constructed of residues from both monomers. Requires pyridoxal 5'-phosphate as cofactor.

The protein resides in the cytoplasm. It catalyses the reaction N(6),N(6)-dimethyl-L-lysine + H(+) = N,N-dimethyl-cadaverine + CO2. The protein operates within secondary metabolite biosynthesis; terpenoid biosynthesis. Decarboxylase; part of the gene cluster that mediates the biosynthesis of flavunoidine, an alkaloidal terpenoid with a tetracyclic cage-like core connected to dimethylcadaverine via a C-N bond and acylated with 5,5-dimethyl-L-pipecolate. The tetracyclic core is synthesized by the terpene cyclase flvE and the cytochrome P450 monooxygenase flvD. The terpene cyclase flvE catalyzes the cyclization of farnesyl pyrophosphate (FPP) to form (1R,4R,5S)-(+)-acoradiene and the cytochrome P450 monooxygenase flvD is then responsible for oxidative conversion of (1R,4R,5S)-(+)-acoradiene into the tetracyclic cage present in the final product flavunoidine. In parallel, the N-methyltransferase flvH dimethylates L-lysine to give N,N-dimethyl-L-Lysin which is decarboxylated by flvG to afford dimethylcadaverine. The terpene cyclase-like protein flvF is the enzyme that attaches the dimethylcadaverine precusor at the C-7 of the tetracyclic cage to yield pre-flavunoidine. The cytochrome monooxygenase flvC hydroxylates the C-10 position of pre-flavunoidine whereas the NRPS flvI acylates the terpenoid core at the hydroxylated C-10 with dimethylpipecolate to yield final flavunoidine. The bifunctional enzyme flvA and the dehydrogenase flvB are responsible for the synthesis of the dimethylpipecolate precursor. The PLP-dependent lyase domain of flvA might use L-O-acetyl-homoserine and alpha-keto-isovalerate to form an intermediary ketone that can cyclize intramolecularly to yield an imine. The imine can be reduced by flvB to yield the 6-carboxylated pipecolate. The C-terminal alpha-KG-dependent oxygenase domain of flvA is then proposed to catalyze the decarboxylation to yield dimethylpipecolate. This chain is Decarboxylase flvG, found in Aspergillus flavus (strain ATCC 200026 / FGSC A1120 / IAM 13836 / NRRL 3357 / JCM 12722 / SRRC 167).